The following is a 230-amino-acid chain: DNA mismatch repair protein MutH (230 aa).

It belongs to the MutH family.

It is found in the cytoplasm. Its function is as follows. Sequence-specific endonuclease that cleaves unmethylated GATC sequences. It is involved in DNA mismatch repair. In Citrobacter koseri (strain ATCC BAA-895 / CDC 4225-83 / SGSC4696), this protein is DNA mismatch repair protein MutH.